The following is a 101-amino-acid chain: Small ribosomal subunit protein uS10 (101 aa).

It belongs to the universal ribosomal protein uS10 family. In terms of assembly, part of the 30S ribosomal subunit.

In terms of biological role, involved in the binding of tRNA to the ribosomes. The protein is Small ribosomal subunit protein uS10 of Mycobacterium bovis (strain ATCC BAA-935 / AF2122/97).